The chain runs to 820 residues: Sucrose synthase 2 (820 aa).

The segment at 276–753 (MVFNVVILSP…GLKRIYEKYT (478 aa)) is GT-B glycosyltransferase.

Belongs to the glycosyltransferase 1 family. Plant sucrose synthase subfamily.

The enzyme catalyses an NDP-alpha-D-glucose + D-fructose = a ribonucleoside 5'-diphosphate + sucrose + H(+). Sucrose-cleaving enzyme that provides UDP-glucose and fructose for various metabolic pathways. This chain is Sucrose synthase 2, found in Tulipa gesneriana (Garden tulip).